A 509-amino-acid polypeptide reads, in one-letter code: Anaerobic nitric oxide reductase flavorubredoxin (509 aa).

The tract at residues 30–210 is zinc metallo-hydrolase; it reads LQGSSYNSYL…PFSRLVTAKI (181 aa). His79, Glu81, Asp83, His147, Asp166, and His227 together coordinate Fe cation. In terms of domain architecture, Flavodoxin-like spans 254–393; that stretch reads ITLFYDTMSN…VCREHGREIA (140 aa). Residues 260 to 264 and 342 to 369 each bind FMN; these read TMSNN and AFGS…ETTL. In terms of domain architecture, Rubredoxin-like spans 457–508; that stretch reads SGCMQCSVCQWIYDPALGEPMQDVTPGTMWSDVPDSFLCPECGLGKDVFNPI. Residues Cys462, Cys465, Cys495, and Cys498 each coordinate Fe cation.

The protein in the N-terminal section; belongs to the zinc metallo-hydrolase group 3 family. Homotetramer. Fe cation is required as a cofactor. FMN serves as cofactor.

It is found in the cytoplasm. It participates in nitrogen metabolism; nitric oxide reduction. In terms of biological role, anaerobic nitric oxide reductase; uses NADH to detoxify nitric oxide (NO), protecting several 4Fe-4S NO-sensitive enzymes. Has at least 2 reductase partners, only one of which (NorW, flavorubredoxin reductase) has been identified. NO probably binds to the di-iron center; electrons enter from the NorW at rubredoxin and are transferred sequentially to the FMN center and the di-iron center. Also able to function as an aerobic oxygen reductase. This is Anaerobic nitric oxide reductase flavorubredoxin from Pectobacterium atrosepticum (strain SCRI 1043 / ATCC BAA-672) (Erwinia carotovora subsp. atroseptica).